A 323-amino-acid polypeptide reads, in one-letter code: ADP-ribose glycohydrolase MACROD1 (323 aa).

N6-succinyllysine occurs at positions 94, 101, and 127. A Glycyl lysine isopeptide (Lys-Gly) (interchain with G-Cter in SUMO2) cross-link involves residue lysine 136. The Macro domain occupies 139-320; the sequence is DPKYKKDKQL…IYRERLPHYF (182 aa). Residue 157-159 coordinates substrate; sequence GDI. Lysine 161 bears the N6-acetyllysine mark. Substrate is bound by residues 170-172, 177-182, 265-271, and phenylalanine 304; these read AAN, GGGGVD, and ISTGVFG.

This sequence belongs to the MacroD-type family. MacroD1/2-like subfamily. In terms of assembly, interacts with ESR1; Interacts in a manner that is estrogen independent but is enhanced by estrogen. Interacts (via macro domain) with AR.

It is found in the nucleus. The enzyme catalyses 3''-O-acetyl-ADP-D-ribose + H2O = ADP-D-ribose + acetate + H(+). The catalysed reaction is 2''-O-acetyl-ADP-D-ribose + H2O = ADP-D-ribose + acetate + H(+). It catalyses the reaction 4-O-(ADP-D-ribosyl)-L-aspartyl-[protein] + H2O = L-aspartyl-[protein] + ADP-D-ribose + H(+). It carries out the reaction 5-O-(ADP-D-ribosyl)-L-glutamyl-[protein] + H2O = L-glutamyl-[protein] + ADP-D-ribose + H(+). The enzyme catalyses alpha-NAD(+) + H2O = ADP-D-ribose + nicotinamide + H(+). Subject to competitive inhibition by the product ADP-ribose. Removes ADP-ribose from aspartate and glutamate residues in proteins bearing a single ADP-ribose moiety. Inactive towards proteins bearing poly-ADP-ribose. Deacetylates O-acetyl-ADP ribose, a signaling molecule generated by the deacetylation of acetylated lysine residues in histones and other proteins. Plays a role in estrogen signaling. Binds to androgen receptor (AR) and amplifies the transactivation function of AR in response to androgen. May play an important role in carcinogenesis and/or progression of hormone-dependent cancers by feed-forward mechanism that activates ESR1 transactivation. Could be an ESR1 coactivator, providing a positive feedback regulatory loop for ESR1 signal transduction. Could be involved in invasive growth by down-regulating CDH1 in endometrial cancer cells. Enhances ESR1-mediated transcription activity. This chain is ADP-ribose glycohydrolase MACROD1, found in Mus musculus (Mouse).